The chain runs to 105 residues: Ig lambda-1 chain C region (105 aa).

In terms of domain architecture, Ig-like spans 6–100 (PSVTLFPPSS…EGHTVEKSLS (95 aa)). An intrachain disulfide couples Cys-27 to Cys-86.

The sequence is that of Ig lambda-1 chain C region from Mus musculus (Mouse).